The primary structure comprises 89 residues: Elongation factor 1-beta (89 aa).

This sequence belongs to the EF-1-beta/EF-1-delta family.

Promotes the exchange of GDP for GTP in EF-1-alpha/GDP, thus allowing the regeneration of EF-1-alpha/GTP that could then be used to form the ternary complex EF-1-alpha/GTP/AAtRNA. In Methanococcus maripaludis (strain C5 / ATCC BAA-1333), this protein is Elongation factor 1-beta.